A 403-amino-acid polypeptide reads, in one-letter code: uncharacterized protein (403 aa).

Helical transmembrane passes span 29-49 (FVIF…CGFL) and 55-75 (AFIA…FFGC).

Belongs to the chlamydial CPn_0129/CT_036/TC_0306 family.

The protein localises to the cell membrane. This is an uncharacterized protein from Chlamydia trachomatis serovar D (strain ATCC VR-885 / DSM 19411 / UW-3/Cx).